The sequence spans 246 residues: DNA-directed RNA polymerase subunit alpha (246 aa).

The protein belongs to the RNA polymerase alpha chain family. In terms of assembly, in plastids the minimal PEP RNA polymerase catalytic core is composed of four subunits: alpha, beta, beta', and beta''. When a (nuclear-encoded) sigma factor is associated with the core the holoenzyme is formed, which can initiate transcription (Potential).

The protein localises to the plastid. It carries out the reaction RNA(n) + a ribonucleoside 5'-triphosphate = RNA(n+1) + diphosphate. DNA-dependent RNA polymerase catalyzes the transcription of DNA into RNA using the four ribonucleoside triphosphates as substrates. The polypeptide is DNA-directed RNA polymerase subunit alpha (rpoA) (Helicosporidium sp. subsp. Simulium jonesii (Green alga)).